A 613-amino-acid chain; its full sequence is Phostensin (613 aa).

Over residues Glu-18–Leu-33 the composition is skewed to basic and acidic residues. Disordered stretches follow at residues Glu-18 to Gln-231 and Gly-266 to Gly-500. A phosphoserine mark is found at Ser-54, Ser-125, Ser-133, Ser-175, and Ser-195. 2 stretches are compositionally biased toward basic and acidic residues: residues Arg-104–Leu-154 and Leu-167–Lys-191. A Phosphothreonine modification is found at Thr-199. Over residues Thr-199 to Ser-221 the composition is skewed to basic and acidic residues. At Ser-224 the chain carries Phosphoserine. A compositionally biased stretch (basic and acidic residues) spans Gly-266–Trp-282. The segment covering Leu-295–Ala-309 has biased composition (polar residues). 3 stretches are compositionally biased toward basic and acidic residues: residues Ala-314–Lys-327, Lys-340–Glu-350, and Glu-357–Leu-366. 2 positions are modified to phosphoserine: Ser-368 and Ser-432. Residues Gln-424–Asp-446 show a composition bias toward pro residues. Lys-457 is modified (N6-acetyllysine). Over residues Pro-476–Pro-499 the composition is skewed to low complexity. 2 positions are modified to phosphoserine: Ser-490 and Ser-530. Residues Gln-552–Glu-595 form a disordered region. Positions Pro-567–Ala-578 are enriched in pro residues. Over residues Pro-580–Leu-589 the composition is skewed to acidic residues.

Interacts with Protein phosphatase 1 (PP1). Isoform 4 is predominantly expressed in leukocytes and spleen.

The protein localises to the cytoplasm. Its subcellular location is the cytoskeleton. Its function is as follows. May target protein phosphatase 1 to F-actin cytoskeleton. The protein is Phostensin (PPP1R18) of Homo sapiens (Human).